We begin with the raw amino-acid sequence, 533 residues long: GMP synthase [glutamine-hydrolyzing] (533 aa).

The Glutamine amidotransferase type-1 domain occupies 25–215 (SIVIFDFGSQ…VFNICKCHAN (191 aa)). The Nucleophile role is filled by Cys-102. Active-site residues include His-189 and Glu-191. Residues 216–408 (WTMGNYIQES…LGLPDEMIWR (193 aa)) form the GMPS ATP-PPase domain. 243–249 (SGGVDSA) lines the ATP pocket.

Homodimer.

The enzyme catalyses XMP + L-glutamine + ATP + H2O = GMP + L-glutamate + AMP + diphosphate + 2 H(+). The protein operates within purine metabolism; GMP biosynthesis; GMP from XMP (L-Gln route): step 1/1. In terms of biological role, catalyzes the synthesis of GMP from XMP. In Dehalococcoides mccartyi (strain CBDB1), this protein is GMP synthase [glutamine-hydrolyzing].